Reading from the N-terminus, the 510-residue chain is uncharacterized protein (510 aa).

The N-terminal stretch at 1–19 (MLILLILYFLFLQLHIFDS) is a signal peptide. Residues 28–48 (IYIHYAICKFIFLLEIYKLIA) form a helical membrane-spanning segment.

The protein resides in the host membrane. This is an uncharacterized protein from Sulfolobus islandicus rod-shaped virus 1 (SIRV-1).